The chain runs to 284 residues: 2,3,4,5-tetrahydropyridine-2,6-dicarboxylate N-succinyltransferase (284 aa).

Substrate contacts are provided by Arg111 and Asp148.

Belongs to the transferase hexapeptide repeat family. In terms of assembly, homotrimer.

The protein localises to the cytoplasm. It carries out the reaction (S)-2,3,4,5-tetrahydrodipicolinate + succinyl-CoA + H2O = (S)-2-succinylamino-6-oxoheptanedioate + CoA. The protein operates within amino-acid biosynthesis; L-lysine biosynthesis via DAP pathway; LL-2,6-diaminopimelate from (S)-tetrahydrodipicolinate (succinylase route): step 1/3. This Brucella anthropi (strain ATCC 49188 / DSM 6882 / CCUG 24695 / JCM 21032 / LMG 3331 / NBRC 15819 / NCTC 12168 / Alc 37) (Ochrobactrum anthropi) protein is 2,3,4,5-tetrahydropyridine-2,6-dicarboxylate N-succinyltransferase.